The following is a 331-amino-acid chain: Ornithine carbamoyltransferase, catabolic (331 aa).

Residues 57-60, Q82, R106, and 133-136 contribute to the carbamoyl phosphate site; these read STRT and HPTQ. L-ornithine-binding positions include N166, D230, and 234-235; that span reads SM. Carbamoyl phosphate is bound by residues 272 to 273 and R317; that span reads CL.

It belongs to the aspartate/ornithine carbamoyltransferase superfamily. OTCase family.

The protein localises to the cytoplasm. It catalyses the reaction carbamoyl phosphate + L-ornithine = L-citrulline + phosphate + H(+). It participates in amino-acid degradation; L-arginine degradation via ADI pathway; carbamoyl phosphate from L-arginine: step 2/2. Its function is as follows. Reversibly catalyzes the transfer of the carbamoyl group from carbamoyl phosphate (CP) to the N(epsilon) atom of ornithine (ORN) to produce L-citrulline. The protein is Ornithine carbamoyltransferase, catabolic (arcB) of Clostridium perfringens (strain ATCC 13124 / DSM 756 / JCM 1290 / NCIMB 6125 / NCTC 8237 / Type A).